Consider the following 1048-residue polypeptide: Nonsense-mediated mRNA decay protein 5 (1048 aa).

The region spanning 24–104 (AETHLKNASK…KDMLIKTMVS (81 aa)) is the Importin N-terminal domain. Ser977 bears the Phosphoserine mark.

GTP-bound Ran dissociates the isolated NMD5/TFIIS complex.

Its subcellular location is the nucleus. It is found in the cytoplasm. In terms of biological role, active in protein import into the nucleus. Its major import substrate is transcription elongation factor TFIIS. This is Nonsense-mediated mRNA decay protein 5 (NMD5) from Saccharomyces cerevisiae (strain ATCC 204508 / S288c) (Baker's yeast).